We begin with the raw amino-acid sequence, 538 residues long: C-22 sterol desaturase ERG5 (538 aa).

The chain crosses the membrane as a helical span at residues 46–66 (LKIFATLICILLVWDQVAYQI). Glycyl lysine isopeptide (Lys-Gly) (interchain with G-Cter in ubiquitin) cross-links involve residues Lys-164 and Lys-198. Cys-476 is a binding site for heme.

It belongs to the cytochrome P450 family. As to quaternary structure, interacts with ERG28. Heme serves as cofactor.

Its subcellular location is the endoplasmic reticulum membrane. The catalysed reaction is 5-dehydroepisterol + NADPH + O2 + H(+) = ergosta-5,7,22,24(28)-tetraen-3beta-ol + NADP(+) + 2 H2O. It functions in the pathway steroid metabolism; ergosterol biosynthesis; ergosterol from zymosterol: step 4/5. C-22 sterol desaturase; part of the third module of ergosterol biosynthesis pathway that includes the late steps of the pathway. ERG5 converts 5-dehydroepisterol into ergosta-5,7,22,24(28)-tetraen-3beta-ol by forming the C-22(23) double bond in the sterol side chain. The third module or late pathway involves the ergosterol synthesis itself through consecutive reactions that mainly occur in the endoplasmic reticulum (ER) membrane. Firstly, the squalene synthase ERG9 catalyzes the condensation of 2 farnesyl pyrophosphate moieties to form squalene, which is the precursor of all steroids. Squalene synthase is crucial for balancing the incorporation of farnesyl diphosphate (FPP) into sterol and nonsterol isoprene synthesis. Secondly, the squalene epoxidase ERG1 catalyzes the stereospecific oxidation of squalene to (S)-2,3-epoxysqualene, which is considered to be a rate-limiting enzyme in steroid biosynthesis. Then, the lanosterol synthase ERG7 catalyzes the cyclization of (S)-2,3 oxidosqualene to lanosterol, a reaction that forms the sterol core. In the next steps, lanosterol is transformed to zymosterol through a complex process involving various demethylation, reduction and desaturation reactions. The lanosterol 14-alpha-demethylase ERG11 (also known as CYP51) catalyzes C14-demethylation of lanosterol to produce 4,4'-dimethyl cholesta-8,14,24-triene-3-beta-ol, which is critical for ergosterol biosynthesis. The C-14 reductase ERG24 reduces the C14=C15 double bond of 4,4-dimethyl-cholesta-8,14,24-trienol to produce 4,4-dimethyl-cholesta-8,24-dienol. 4,4-dimethyl-cholesta-8,24-dienol is substrate of the C-4 demethylation complex ERG25-ERG26-ERG27 in which ERG25 catalyzes the three-step monooxygenation required for the demethylation of 4,4-dimethyl and 4alpha-methylsterols, ERG26 catalyzes the oxidative decarboxylation that results in a reduction of the 3-beta-hydroxy group at the C-3 carbon to an oxo group, and ERG27 is responsible for the reduction of the keto group on the C-3. ERG28 has a role as a scaffold to help anchor ERG25, ERG26 and ERG27 to the endoplasmic reticulum and ERG29 regulates the activity of the iron-containing C4-methylsterol oxidase ERG25. Then, the sterol 24-C-methyltransferase ERG6 catalyzes the methyl transfer from S-adenosyl-methionine to the C-24 of zymosterol to form fecosterol. The C-8 sterol isomerase ERG2 catalyzes the reaction which results in unsaturation at C-7 in the B ring of sterols and thus converts fecosterol to episterol. The sterol-C5-desaturase ERG3 then catalyzes the introduction of a C-5 double bond in the B ring to produce 5-dehydroepisterol. The C-22 sterol desaturase ERG5 further converts 5-dehydroepisterol into ergosta-5,7,22,24(28)-tetraen-3beta-ol by forming the C-22(23) double bond in the sterol side chain. Finally, ergosta-5,7,22,24(28)-tetraen-3beta-ol is substrate of the C-24(28) sterol reductase ERG4 to produce ergosterol. This is C-22 sterol desaturase ERG5 from Saccharomyces cerevisiae (strain ATCC 204508 / S288c) (Baker's yeast).